Reading from the N-terminus, the 167-residue chain is Photosystem I assembly protein Ycf3 (167 aa).

TPR repeat units lie at residues 35–68 (AFTYYRDGMSAQSEGEYAEALQNYYEAMRLEIDP), 72–105 (SYILYNIGLIHTSNGEHAKALEYYFQALERNPSL), and 120–153 (GEQAIQQGDPEASETWFDQAAEYWKQAILLAPSN).

Belongs to the Ycf3 family.

Its subcellular location is the plastid. It is found in the chloroplast thylakoid membrane. Its function is as follows. Essential for the assembly of the photosystem I (PSI) complex. May act as a chaperone-like factor to guide the assembly of the PSI subunits. This chain is Photosystem I assembly protein Ycf3, found in Marchantia polymorpha (Common liverwort).